The following is a 394-amino-acid chain: Elongation factor Tu (394 aa).

Residues 10–204 form the tr-type G domain; the sequence is KPHVNVGTIG…YLDSYIPEPE (195 aa). Residues 19–26 are G1; it reads GHVDHGKT. Residue 19–26 participates in GTP binding; sequence GHVDHGKT. Position 26 (Thr-26) interacts with Mg(2+). Residues 60-64 form a G2 region; the sequence is GITIN. A G3 region spans residues 81-84; the sequence is DCPG. GTP-binding positions include 81 to 85 and 136 to 139; these read DCPGH and NKCD. A G4 region spans residues 136–139; that stretch reads NKCD. Residues 174–176 are G5; sequence SAL.

The protein belongs to the TRAFAC class translation factor GTPase superfamily. Classic translation factor GTPase family. EF-Tu/EF-1A subfamily. In terms of assembly, monomer.

The protein resides in the cytoplasm. It catalyses the reaction GTP + H2O = GDP + phosphate + H(+). Functionally, GTP hydrolase that promotes the GTP-dependent binding of aminoacyl-tRNA to the A-site of ribosomes during protein biosynthesis. In Pectobacterium atrosepticum (strain SCRI 1043 / ATCC BAA-672) (Erwinia carotovora subsp. atroseptica), this protein is Elongation factor Tu.